The primary structure comprises 212 residues: Interleukin-6 (212 aa).

The first 29 residues, 1-29 (MNSFSTSAFGPVAFSLGLLLVLPAAFPAP), serve as a signal peptide directing secretion. The cysteines at positions 72 and 78 are disulfide-linked. A glycan (N-linked (GlcNAc...) asparagine) is linked at Asn73. Ser81 carries the phosphoserine; by FAM20C modification. A disulfide bridge connects residues Cys101 and Cys111.

It belongs to the IL-6 superfamily. As to quaternary structure, component of a hexamer of two molecules each of IL6, IL6R and IL6ST; first binds to IL6R to associate with the signaling subunit IL6ST. Interacts with IL6R (via the N-terminal ectodomain); this interaction may be affected by IL6R-binding with SORL1, hence decreasing IL6 cis signaling. Interacts with SORL1 (via the N-terminal ectodomain); this interaction leads to IL6 internalization and lysosomal degradation. May form a trimeric complex with the soluble SORL1 ectodomain and soluble IL6R receptor; this interaction might stabilize circulating IL6, hence promoting IL6 trans signaling. N- and O-glycosylated. As to expression, produced by skeletal muscle.

The protein localises to the secreted. Cytokine with a wide variety of biological functions in immunity, tissue regeneration, and metabolism. Binds to IL6R, then the complex associates to the signaling subunit IL6ST/gp130 to trigger the intracellular IL6-signaling pathway. The interaction with the membrane-bound IL6R and IL6ST stimulates 'classic signaling', whereas the binding of IL6 and soluble IL6R to IL6ST stimulates 'trans-signaling'. Alternatively, 'cluster signaling' occurs when membrane-bound IL6:IL6R complexes on transmitter cells activate IL6ST receptors on neighboring receiver cells. In terms of biological role, IL6 is a potent inducer of the acute phase response. Rapid production of IL6 contributes to host defense during infection and tissue injury, but excessive IL6 synthesis is involved in disease pathology. In the innate immune response, is synthesized by myeloid cells, such as macrophages and dendritic cells, upon recognition of pathogens through toll-like receptors (TLRs) at the site of infection or tissue injury. In the adaptive immune response, is required for the differentiation of B cells into immunoglobulin-secreting cells. Plays a major role in the differentiation of CD4(+) T cell subsets. Essential factor for the development of T follicular helper (Tfh) cells that are required for the induction of germinal-center formation. Required to drive naive CD4(+) T cells to the Th17 lineage. Also required for proliferation of myeloma cells and the survival of plasmablast cells. Its function is as follows. Acts as an essential factor in bone homeostasis and on vessels directly or indirectly by induction of VEGF, resulting in increased angiogenesis activity and vascular permeability. Induces, through 'trans-signaling' and synergistically with IL1B and TNF, the production of VEGF. Involved in metabolic controls, is discharged into the bloodstream after muscle contraction increasing lipolysis and improving insulin resistance. 'Trans-signaling' in central nervous system also regulates energy and glucose homeostasis. Mediates, through GLP-1, crosstalk between insulin-sensitive tissues, intestinal L cells and pancreatic islets to adapt to changes in insulin demand. Also acts as a myokine. Plays a protective role during liver injury, being required for maintenance of tissue regeneration. Also has a pivotal role in iron metabolism by regulating HAMP/hepcidin expression upon inflammation or bacterial infection. Through activation of IL6ST-YAP-NOTCH pathway, induces inflammation-induced epithelial regeneration. This Homo sapiens (Human) protein is Interleukin-6.